Reading from the N-terminus, the 445-residue chain is Flagellum-associated coiled-coil domain-containing protein 1 (445 aa).

A disordered region spans residues 26–47 (PQLPRKNSTGSSKLTPLVPAPK). A compositionally biased stretch (polar residues) spans 30–39 (RKNSTGSSKL). Coiled coils occupy residues 122-226 (SRTN…TYQD) and 283-315 (AVFE…TKEV). Lysine 376 carries the post-translational modification N6-acetyllysine. The stretch at 387–414 (EKYKHTIQILTEENIHLKQKIISKNEEI) forms a coiled coil.

The protein localises to the cytoplasm. It localises to the cytoplasmic granule. It is found in the cell projection. The protein resides in the cilium. Its subcellular location is the flagellum. The polypeptide is Flagellum-associated coiled-coil domain-containing protein 1 (Homo sapiens (Human)).